The chain runs to 377 residues: Glycine oxidase (377 aa).

Residues 14–15, 34–35, 42–43, 47–49, and V180 each bind FAD; these read VI, EK, AS, and AGM. Substrate is bound by residues R309 and R336. 334-340 contributes to the FAD binding site; sequence HYRNGIL.

This sequence belongs to the DAO family. ThiO subfamily. As to quaternary structure, homotetramer. The cofactor is FAD.

The enzyme catalyses glycine + O2 + H2O = glyoxylate + H2O2 + NH4(+). The catalysed reaction is N-ethylglycine + O2 + H2O = ethylamine + glyoxylate + H2O2. It catalyses the reaction sarcosine + O2 + H2O = methylamine + glyoxylate + H2O2. It carries out the reaction D-alanine + O2 + H2O = pyruvate + H2O2 + NH4(+). Its pathway is cofactor biosynthesis; thiamine diphosphate biosynthesis. Is inhibited at high substrate concentration. Functionally, catalyzes the FAD-dependent oxidative deamination of various amines and D-amino acids to yield the corresponding alpha-keto acids, ammonia/amine, and hydrogen peroxide. Oxidizes glycine, sarcosine (N-methylglycine), N-ethylglycine, D-proline, D-alanine, glycine-ethyl ester, and some other D-amino acids. Does not act on L-proline. Is essential for thiamine biosynthesis since the oxidation of glycine catalyzed by ThiO generates the glycine imine intermediate (dehydroglycine) required for the biosynthesis of the thiazole ring of thiamine pyrophosphate. In Geobacillus kaustophilus (strain HTA426), this protein is Glycine oxidase.